We begin with the raw amino-acid sequence, 570 residues long: FERM domain-containing protein 5 (570 aa).

The region spanning 17-298 (YSCTVRLLDD…ENQAFYKLEK (282 aa)) is the FERM domain. An interaction with ROCK1 region spans residues 308-353 (SNLFFKGSRFRYSGRVAKEVMESSAKIKREPPEIHRAGMVPSRSCP). Residues 344-367 (AGMVPSRSCPSITHGPRLSSVPRT) form a disordered region. Position 375 is a phosphoserine (Ser-375). Residues 385-407 (DSAHSTPVRSTSHGDTFLPHVRS) are disordered. Over residues 388–398 (HSTPVRSTSHG) the composition is skewed to polar residues. Residues 504–524 (LLLVTMGLLFVLLLLLIILTE) traverse the membrane as a helical segment.

As to quaternary structure, interacts with CTNND1. Interacts with ITGB5 (via cytoplasmic domain) and ROCK1.

It localises to the membrane. The protein resides in the cell junction. It is found in the adherens junction. In terms of biological role, may be involved in regulation of cell migration. May regulate cell-matrix interactions via its interaction with ITGB5 and modifying ITGB5 cytoplasmic tail interactions such as with FERMT2 and TLN1. May regulate ROCK1 kinase activity possibly involved in regulation of actin stress fiber formation. This is FERM domain-containing protein 5 (FRMD5) from Homo sapiens (Human).